We begin with the raw amino-acid sequence, 294 residues long: 4-hydroxy-tetrahydrodipicolinate synthase (294 aa).

Thr44 lines the pyruvate pocket. Tyr132 acts as the Proton donor/acceptor in catalysis. Lys160 acts as the Schiff-base intermediate with substrate in catalysis. Val202 serves as a coordination point for pyruvate.

The protein belongs to the DapA family. Homotetramer; dimer of dimers.

The protein resides in the cytoplasm. It carries out the reaction L-aspartate 4-semialdehyde + pyruvate = (2S,4S)-4-hydroxy-2,3,4,5-tetrahydrodipicolinate + H2O + H(+). It participates in amino-acid biosynthesis; L-lysine biosynthesis via DAP pathway; (S)-tetrahydrodipicolinate from L-aspartate: step 3/4. In terms of biological role, catalyzes the condensation of (S)-aspartate-beta-semialdehyde [(S)-ASA] and pyruvate to 4-hydroxy-tetrahydrodipicolinate (HTPA). In Leptospira borgpetersenii serovar Hardjo-bovis (strain JB197), this protein is 4-hydroxy-tetrahydrodipicolinate synthase.